We begin with the raw amino-acid sequence, 301 residues long: Averufin oxidase A (301 aa).

A signal peptide spans 1 to 23; the sequence is MPTYALLGATGATGSAILRCLLA. 3 N-linked (GlcNAc...) asparagine glycosylation sites follow: asparagine 62, asparagine 86, and asparagine 190.

The protein belongs to the avfA family.

Its pathway is mycotoxin biosynthesis. Functionally, averufin oxidase A; part of the fragmented gene cluster that mediates the biosynthesis of dothistromin (DOTH), a polyketide toxin very similar in structure to the aflatoxin precursor, versicolorin B. The first step of the pathway is the conversion of acetate to norsolorinic acid (NOR) and requires the fatty acid synthase subunits hexA and hexB, as well as the polyketide synthase pksA. PksA combines a hexanoyl starter unit and 7 malonyl-CoA extender units to synthesize the precursor NOR. The hexanoyl starter unit is provided to the acyl-carrier protein (ACP) domain by the fungal fatty acid synthase hexA/hexB. The second step is the conversion of NOR to averantin (AVN) and requires the norsolorinic acid ketoreductase nor1, which catalyzes the dehydration of norsolorinic acid to form (1'S)-averantin. The cytochrome P450 monooxygenase avnA then catalyzes the hydroxylation of AVN to 5'hydroxyaverantin (HAVN). The next step is performed by adhA that transforms HAVN to averufin (AVF). Averufin might then be converted to hydroxyversicolorone by cypX and avfA. Hydroxyversicolorone is further converted versiconal hemiacetal acetate (VHA) by moxY. VHA is then the substrate for the versiconal hemiacetal acetate esterase est1 to yield versiconal (VAL). Versicolorin B synthase vbsA then converts VAL to versicolorin B (VERB) by closing the bisfuran ring. Then, the activity of the versicolorin B desaturase verB leads to versicolorin A (VERA). DotB, a predicted chloroperoxidase, may perform epoxidation of the A-ring of VERA. Alternatively, a cytochrome P450, such as cypX or avnA could catalyze this step. It is also possible that another, uncharacterized, cytochrome P450 enzyme is responsible for this step. Opening of the epoxide could potentially be achieved by the epoxide hydrolase epoA. However, epoA seems not to be required for DOTH biosynthesis, but other epoxide hydrolases may have the ability to complement this hydrolysis. Alternatively, opening of the epoxide ring could be achieved non-enzymatically. The next step is the deoxygenation of ring A to yield the 5,8-dihydroxyanthraquinone which is most likely catalyzed by the NADPH dehydrogenase encoded by ver1. The last stages of DOTH biosynthesis are proposed to involve hydroxylation of the bisfuran. OrdB and norB might have oxidative roles here. An alternative possibility is that cytochrome P450 monoogenases such as avnA and cypX might perform these steps in addition to previously proposed steps. The chain is Averufin oxidase A from Dothistroma septosporum (Red band needle blight fungus).